The primary structure comprises 574 residues: Enolase 4 (574 aa).

Positions 165–175 (EKERRQMEREA) are enriched in basic and acidic residues. The interval 165-221 (EKERRQMEREASPMPLQPEPSPVTSPAPGKKKGSGKGKKAAVVEKPIPPEETPEAVV) is disordered. Residues 179 to 189 (PLQPEPSPVTS) are compositionally biased toward pro residues. Over residues 193–203 (GKKKGSGKGKK) the composition is skewed to basic residues. Glu287 lines the substrate pocket. The active-site Proton acceptor is the Lys467. Lys518 is a substrate binding site.

It belongs to the enolase family.

The catalysed reaction is (2R)-2-phosphoglycerate = phosphoenolpyruvate + H2O. It functions in the pathway carbohydrate degradation; glycolysis; pyruvate from D-glyceraldehyde 3-phosphate: step 4/5. The sequence is that of Enolase 4 (eno4) from Xenopus tropicalis (Western clawed frog).